The sequence spans 396 residues: MAMIEVGFERQNFYPLKRKSALLLKLIAVVFAVLLFCEFLIYYLAIFQCNWPEVKTTAYDGEQASHEPVLKAMFLADTHLLGEFLGHWLDKLRREWQMERALQTALWLLQPEVVFILGDVFDEGKWSTPEAWADDVERFQKMFRHPSHVQLKVVAGNHDIGFHYEMNTYKVERFEKVFSSERLFSWKGINFVMVNSVAMNGDGCGICSEAEAELIEVSHRLNCSREARGSRRCGPGPLLPVSAPVLLQHYPLYRRSDANCSGDDAAPPEERDIPFKENYDVLSREASQKLLWWLQPRLVLSGHTHSACEVHHGGRVPEFSVPSFSWRNRNNPSFIMGSITPTDYALSKCYLPREDVVLVIYCGAVGFLVVLTLSHLGLLASPFLSGLNLLRKRKTR.

Residues 27-47 (IAVVFAVLLFCEFLIYYLAIF) traverse the membrane as a helical segment. A divalent metal cation contacts are provided by Asp77, Asp119, Asn157, His249, His303, and His305. Residues 356–376 (VVLVIYCGAVGFLVVLTLSHL) traverse the membrane as a helical segment. The Di-lysine motif signature appears at 392–396 (KRKTR).

It belongs to the metallophosphoesterase superfamily. MPPE1 family. As to quaternary structure, interacts with GPI-anchor proteins (via the GPI portion). Interacts with TMED10. The cofactor is Mn(2+).

The protein localises to the endoplasmic reticulum-Golgi intermediate compartment membrane. Functionally, metallophosphoesterase that catalyzes the removal of a side-chain ethanolamine-phosphate (EtNP) from the second mannose of the GPI-anchor protein intermediate. Participates in the glycan remodeling steps of GPI-anchor maturation to allow an efficient transport of GPI-anchor proteins from the endoplasmic reticulum to the Golgi. This Macaca fascicularis (Crab-eating macaque) protein is Metallophosphoesterase 1.